Consider the following 137-residue polypeptide: Small ribosomal subunit protein uS12 (137 aa).

The disordered stretch occupies residues 1–26 (MPTINQLVTKGRKRKASKTKSPALNQ).

The protein belongs to the universal ribosomal protein uS12 family. Part of the 30S ribosomal subunit. Contacts proteins S8 and S17. May interact with IF1 in the 30S initiation complex.

Functionally, with S4 and S5 plays an important role in translational accuracy. In terms of biological role, interacts with and stabilizes bases of the 16S rRNA that are involved in tRNA selection in the A site and with the mRNA backbone. Located at the interface of the 30S and 50S subunits, it traverses the body of the 30S subunit contacting proteins on the other side and probably holding the rRNA structure together. The combined cluster of proteins S8, S12 and S17 appears to hold together the shoulder and platform of the 30S subunit. The chain is Small ribosomal subunit protein uS12 from Mycoplasmopsis pulmonis (strain UAB CTIP) (Mycoplasma pulmonis).